Consider the following 345-residue polypeptide: Centromere protein U (345 aa).

Composition is skewed to basic residues over residues 1-10 and 19-29; these read MSSKKRTKRN and HKGRSHPRRKF. Disordered regions lie at residues 1 to 37 and 64 to 153; these read MSSK…EPDV and AVDA…SSVQ. A compositionally biased stretch (basic and acidic residues) spans 88-106; the sequence is NAERSEKMLLETPEGDVHE. The span at 142-152 shows a compositional bias: low complexity; the sequence is SDSSVNSPSSV. A coiled-coil region spans residues 201 to 294; that stretch reads CSAFEDQVTD…QDYLDYREEN (94 aa). The Nuclear localization signal motif lies at 222 to 239; it reads KKKNAKVVADIKKKRQRL.

This sequence belongs to the CENP-U/AME1 family. As to quaternary structure, interacts with CENPH-CENPI complex at the kinetochore.

Its subcellular location is the nucleus. It is found in the chromosome. The protein localises to the centromere. In terms of biological role, probable component of a centromeric complex involved in assembly of kinetochore proteins, mitotic progression and chromosome segregation. Required for maintenance of sister chromatid adhesion during mitotic checkpoint activation. This is Centromere protein U (CENPU) from Gallus gallus (Chicken).